We begin with the raw amino-acid sequence, 829 residues long: Periplasmic nitrate reductase (829 aa).

A signal peptide (tat-type signal) is located at residues 1–29; it reads MKMTRRAFVKANAAASAAAVAGVTLPASA. Residues 41 to 97 enclose the 4Fe-4S Mo/W bis-MGD-type domain; that stretch reads IKWDKAPCRFCGTGCSVLVGTQNGRVVATQGDPEAPVNKGLNCIKGYFLSKIMYGKD. Residues Cys48, Cys51, Cys55, and Cys83 each contribute to the [4Fe-4S] cluster site. Mo-bis(molybdopterin guanine dinucleotide) is bound by residues Lys85, Gln152, Asn177, Cys181, 214 to 221, 245 to 249, 264 to 266, Met374, Gln378, Asn484, 510 to 511, Lys533, Asp560, and 718 to 727; these read WGSNMAEM, STYYH, QSD, SD, and TGRVLEHWHT. Phe794 serves as a coordination point for substrate. 2 residues coordinate Mo-bis(molybdopterin guanine dinucleotide): Asn802 and Lys819.

Belongs to the prokaryotic molybdopterin-containing oxidoreductase family. NasA/NapA/NarB subfamily. As to quaternary structure, component of the periplasmic nitrate reductase NapAB complex composed of NapA and NapB. The cofactor is [4Fe-4S] cluster. Mo-bis(molybdopterin guanine dinucleotide) is required as a cofactor. Predicted to be exported by the Tat system. The position of the signal peptide cleavage has not been experimentally proven.

The protein localises to the periplasm. The catalysed reaction is 2 Fe(II)-[cytochrome] + nitrate + 2 H(+) = 2 Fe(III)-[cytochrome] + nitrite + H2O. Functionally, catalytic subunit of the periplasmic nitrate reductase complex NapAB. Receives electrons from NapB and catalyzes the reduction of nitrate to nitrite. The protein is Periplasmic nitrate reductase of Aliivibrio fischeri (strain ATCC 700601 / ES114) (Vibrio fischeri).